The following is a 250-amino-acid chain: Hydroxyacylglutathione hydrolase (250 aa).

7 residues coordinate Zn(2+): H53, H55, D57, H58, H111, D128, and H166.

This sequence belongs to the metallo-beta-lactamase superfamily. Glyoxalase II family. In terms of assembly, monomer. Zn(2+) is required as a cofactor.

It catalyses the reaction an S-(2-hydroxyacyl)glutathione + H2O = a 2-hydroxy carboxylate + glutathione + H(+). The protein operates within secondary metabolite metabolism; methylglyoxal degradation; (R)-lactate from methylglyoxal: step 2/2. Functionally, thiolesterase that catalyzes the hydrolysis of S-D-lactoyl-glutathione to form glutathione and D-lactic acid. The sequence is that of Hydroxyacylglutathione hydrolase from Methylobacillus flagellatus (strain ATCC 51484 / DSM 6875 / VKM B-1610 / KT).